Consider the following 214-residue polypeptide: Probable transaldolase (214 aa).

Lysine 83 functions as the Schiff-base intermediate with substrate in the catalytic mechanism.

Belongs to the transaldolase family. Type 3B subfamily.

It localises to the cytoplasm. It carries out the reaction D-sedoheptulose 7-phosphate + D-glyceraldehyde 3-phosphate = D-erythrose 4-phosphate + beta-D-fructose 6-phosphate. Its pathway is carbohydrate degradation; pentose phosphate pathway; D-glyceraldehyde 3-phosphate and beta-D-fructose 6-phosphate from D-ribose 5-phosphate and D-xylulose 5-phosphate (non-oxidative stage): step 2/3. In terms of biological role, transaldolase is important for the balance of metabolites in the pentose-phosphate pathway. The chain is Probable transaldolase from Leptospira biflexa serovar Patoc (strain Patoc 1 / Ames).